Reading from the N-terminus, the 861-residue chain is Isoleucine--tRNA ligase (861 aa).

A 'HIGH' region motif is present at residues 57–67; the sequence is PYANGNIHVGH. Glu-549 contacts L-isoleucyl-5'-AMP. Positions 590–594 match the 'KMSKS' region motif; it reads KMSKS. Lys-593 serves as a coordination point for ATP.

Belongs to the class-I aminoacyl-tRNA synthetase family. IleS type 1 subfamily. As to quaternary structure, monomer.

The protein localises to the cytoplasm. The enzyme catalyses tRNA(Ile) + L-isoleucine + ATP = L-isoleucyl-tRNA(Ile) + AMP + diphosphate. Catalyzes the attachment of isoleucine to tRNA(Ile). As IleRS can inadvertently accommodate and process structurally similar amino acids such as valine, to avoid such errors it has two additional distinct tRNA(Ile)-dependent editing activities. One activity is designated as 'pretransfer' editing and involves the hydrolysis of activated Val-AMP. The other activity is designated 'posttransfer' editing and involves deacylation of mischarged Val-tRNA(Ile). In Mycoplasma pneumoniae (strain ATCC 29342 / M129 / Subtype 1) (Mycoplasmoides pneumoniae), this protein is Isoleucine--tRNA ligase.